Here is a 260-residue protein sequence, read N- to C-terminus: Adenosylcobinamide-GDP ribazoletransferase (260 aa).

7 consecutive transmembrane segments (helical) span residues 42–62 (TWAL…VYKI), 68–88 (LTPN…TGAL), 118–137 (IGTY…WSAL), 144–166 (WLVT…AFMS), 180–200 (AGAP…LVLT), 201–221 (LALG…AGLI), and 237–257 (ILGA…AAFQ).

The protein belongs to the CobS family. Mg(2+) serves as cofactor.

The protein resides in the cell inner membrane. The catalysed reaction is alpha-ribazole + adenosylcob(III)inamide-GDP = adenosylcob(III)alamin + GMP + H(+). The enzyme catalyses alpha-ribazole 5'-phosphate + adenosylcob(III)inamide-GDP = adenosylcob(III)alamin 5'-phosphate + GMP + H(+). The protein operates within cofactor biosynthesis; adenosylcobalamin biosynthesis; adenosylcobalamin from cob(II)yrinate a,c-diamide: step 7/7. Functionally, joins adenosylcobinamide-GDP and alpha-ribazole to generate adenosylcobalamin (Ado-cobalamin). Also synthesizes adenosylcobalamin 5'-phosphate from adenosylcobinamide-GDP and alpha-ribazole 5'-phosphate. In Bradyrhizobium diazoefficiens (strain JCM 10833 / BCRC 13528 / IAM 13628 / NBRC 14792 / USDA 110), this protein is Adenosylcobinamide-GDP ribazoletransferase.